The following is a 220-amino-acid chain: 7-cyano-7-deazaguanine synthase (220 aa).

11-21 (VSGGMDSVTLM) is an ATP binding site. Zn(2+) is bound by residues cysteine 186, cysteine 194, cysteine 197, and cysteine 200.

This sequence belongs to the QueC family. Requires Zn(2+) as cofactor.

The catalysed reaction is 7-carboxy-7-deazaguanine + NH4(+) + ATP = 7-cyano-7-deazaguanine + ADP + phosphate + H2O + H(+). It participates in purine metabolism; 7-cyano-7-deazaguanine biosynthesis. In terms of biological role, catalyzes the ATP-dependent conversion of 7-carboxy-7-deazaguanine (CDG) to 7-cyano-7-deazaguanine (preQ(0)). The chain is 7-cyano-7-deazaguanine synthase from Porphyromonas gingivalis (strain ATCC BAA-308 / W83).